A 157-amino-acid chain; its full sequence is Phosphopantetheine adenylyltransferase (157 aa).

A substrate-binding site is contributed by serine 9. ATP-binding positions include 9-10 (SF) and histidine 17. Residues lysine 41, threonine 73, and arginine 87 each contribute to the substrate site. Residues 88–90 (GIR), glutamate 98, and 122–128 (YQDISSS) each bind ATP.

The protein belongs to the bacterial CoaD family. As to quaternary structure, homohexamer. Mg(2+) is required as a cofactor.

It localises to the cytoplasm. The catalysed reaction is (R)-4'-phosphopantetheine + ATP + H(+) = 3'-dephospho-CoA + diphosphate. It functions in the pathway cofactor biosynthesis; coenzyme A biosynthesis; CoA from (R)-pantothenate: step 4/5. Its function is as follows. Reversibly transfers an adenylyl group from ATP to 4'-phosphopantetheine, yielding dephospho-CoA (dPCoA) and pyrophosphate. The polypeptide is Phosphopantetheine adenylyltransferase (Oenococcus oeni (strain ATCC BAA-331 / PSU-1)).